Reading from the N-terminus, the 735-residue chain is Polycomb protein sop-2 (735 aa).

The segment covering 1–15 (MSSNLTSNEMSSTSA) has biased composition (polar residues). Disordered stretches follow at residues 1–59 (MSSN…SSSS), 223–288 (AARS…APAA), and 300–534 (PQES…PVLQ). The RNA-binding stretch occupies residues 224–503 (ARSSRMAARR…APATPATPAS (280 aa)). Residues 239–288 (YRGAFRGAARGAPSRRPAPAAEVAPETPVAAPMAPAAPAAPATPEAAPAA) show a composition bias toward low complexity. Basic and acidic residues-rich tracts occupy residues 317 to 355 (DTSK…DGGR) and 389 to 398 (RAAEKKKPED). Positions 399–413 (SDAAEEQEVEMEVDN) are enriched in acidic residues. The span at 450 to 470 (VEPKKEPVDEPAEKIPKRSEA) shows a compositional bias: basic and acidic residues. Over residues 471 to 504 (APEVPATATTKEAPPSTSSSPPDAPATPATPASS) the composition is skewed to low complexity. A compositionally biased stretch (polar residues) spans 520 to 534 (LTGSPPESETPPVLQ). Residues 621 to 712 (LVENNHEATL…YGTEVLNHYR (92 aa)) are SAM-like.

As to quaternary structure, homodimer. Interacts with ubc-9. Binds through its N-terminal region to the N-terminal region of sor-1. Sumoylated by ubc-9. Sumoylation is required for the transcriptional regulation of homeotic genes. In terms of tissue distribution, widely expressed. Weakly expressed in most somatic cells of 50-cell stage embryos. At 200 cell stage, it is strongly expressed. By comma stage, it is expressed in most somatic cells.

It is found in the nucleus. In terms of biological role, polycomb group (PcG) protein. PcG proteins act by forming multiprotein complexes, which are required to maintain the transcriptionally repressive state of homeotic genes throughout development. PcG proteins are not required to initiate repression, but to maintain it during later stages of development. Also required to repress expression of other genes and for localization of sor-1. Binds RNA. This Caenorhabditis elegans protein is Polycomb protein sop-2 (sop-2).